The chain runs to 249 residues: Ubiquinone biosynthesis O-methyltransferase (249 aa).

The tract at residues 1–21 (MIPEVSNEASQPAAHRQENVD) is disordered. S-adenosyl-L-methionine is bound by residues Arg-52, Gly-72, Asp-93, and Met-137.

This sequence belongs to the methyltransferase superfamily. UbiG/COQ3 family.

It catalyses the reaction a 3-demethylubiquinol + S-adenosyl-L-methionine = a ubiquinol + S-adenosyl-L-homocysteine + H(+). It carries out the reaction a 3-(all-trans-polyprenyl)benzene-1,2-diol + S-adenosyl-L-methionine = a 2-methoxy-6-(all-trans-polyprenyl)phenol + S-adenosyl-L-homocysteine + H(+). The protein operates within cofactor biosynthesis; ubiquinone biosynthesis. Functionally, O-methyltransferase that catalyzes the 2 O-methylation steps in the ubiquinone biosynthetic pathway. The chain is Ubiquinone biosynthesis O-methyltransferase from Sodalis glossinidius (strain morsitans).